The following is a 1373-amino-acid chain: DNA-directed RNA polymerase subunit beta (1373 aa).

The protein belongs to the RNA polymerase beta chain family. As to quaternary structure, the RNAP catalytic core consists of 2 alpha, 1 beta, 1 beta' and 1 omega subunit. When a sigma factor is associated with the core the holoenzyme is formed, which can initiate transcription.

It carries out the reaction RNA(n) + a ribonucleoside 5'-triphosphate = RNA(n+1) + diphosphate. In terms of biological role, DNA-dependent RNA polymerase catalyzes the transcription of DNA into RNA using the four ribonucleoside triphosphates as substrates. In Rickettsia canadensis (strain McKiel), this protein is DNA-directed RNA polymerase subunit beta.